A 354-amino-acid polypeptide reads, in one-letter code: Photosystem II protein D1 2 (354 aa).

3 helical membrane passes run 29-46 (YIGWFGVLMIPTLLTATT), 118-133 (HFLIGVFCYMGREWEL), and 142-156 (WIAVAYSAPVAAATA). Residue His118 participates in chlorophyll a binding. Pheophytin a is bound at residue Tyr126. [CaMn4O5] cluster is bound by residues Asp170 and Glu189. The helical transmembrane segment at 197 to 218 (FHQLGVAGVFGGALFSAMHGSL) threads the bilayer. Chlorophyll a is bound at residue His198. A quinone contacts are provided by residues His215 and 264-265 (SF). His215 contacts Fe cation. His272 lines the Fe cation pocket. A helical transmembrane segment spans residues 274–288 (FLAAWPVIGIWFTAL). Positions 332, 333, 342, and 344 each coordinate [CaMn4O5] cluster. Residues 345 to 354 (AVEVAPAVRG) constitute a propeptide that is removed on maturation.

The protein belongs to the reaction center PufL/M/PsbA/D family. PSII is composed of 1 copy each of membrane proteins PsbA, PsbB, PsbC, PsbD, PsbE, PsbF, PsbH, PsbI, PsbJ, PsbK, PsbL, PsbM, PsbT, PsbX, PsbY, PsbZ, Psb30/Ycf12, peripheral proteins PsbO, CyanoQ (PsbQ), PsbU, PsbV and a large number of cofactors. It forms dimeric complexes. Requires The D1/D2 heterodimer binds P680, chlorophylls that are the primary electron donor of PSII, and subsequent electron acceptors. It shares a non-heme iron and each subunit binds pheophytin, quinone, additional chlorophylls, carotenoids and lipids. D1 provides most of the ligands for the Mn4-Ca-O5 cluster of the oxygen-evolving complex (OEC). There is also a Cl(-1) ion associated with D1 and D2, which is required for oxygen evolution. The PSII complex binds additional chlorophylls, carotenoids and specific lipids. as cofactor. In terms of processing, tyr-161 forms a radical intermediate that is referred to as redox-active TyrZ, YZ or Y-Z. C-terminally processed by CtpA; processing is essential to allow assembly of the oxygen-evolving complex and thus photosynthetic growth.

It localises to the cellular thylakoid membrane. It catalyses the reaction 2 a plastoquinone + 4 hnu + 2 H2O = 2 a plastoquinol + O2. In terms of biological role, photosystem II (PSII) is a light-driven water:plastoquinone oxidoreductase that uses light energy to abstract electrons from H(2)O, generating O(2) and a proton gradient subsequently used for ATP formation. It consists of a core antenna complex that captures photons, and an electron transfer chain that converts photonic excitation into a charge separation. The D1/D2 (PsbA/PsbD) reaction center heterodimer binds P680, the primary electron donor of PSII as well as several subsequent electron acceptors. This Synechococcus sp. (strain JA-2-3B'a(2-13)) (Cyanobacteria bacterium Yellowstone B-Prime) protein is Photosystem II protein D1 2.